The sequence spans 148 residues: UPF0179 protein VNG_1401C (148 aa).

This sequence belongs to the UPF0179 family.

This Halobacterium salinarum (strain ATCC 700922 / JCM 11081 / NRC-1) (Halobacterium halobium) protein is UPF0179 protein VNG_1401C.